The following is a 266-amino-acid chain: Enoyl-CoA hydratase EchA19 (266 aa).

Glutamate 120 is a catalytic residue. The residue at position 135 (lysine 135) is an N6-succinyllysine. The active site involves glutamate 140. Lysine 142 bears the N6-succinyllysine mark.

This sequence belongs to the enoyl-CoA hydratase/isomerase family. In terms of assembly, homotrimer; substrate probably binds in elongated tunnels between the subunits. In terms of processing, succinylated in vitro at pH 8.1, succinylation reduces specific activity of the enzyme 5.5-fold; succinyl-CoA is a downstream by-product of cholesterol degradation. Can be de-succinylated in vitro by NAD-dependent protein deacylase (AC P9WGG3). Succinylation may be a negative feedback regulator of cholesterol metabolism.

It carries out the reaction (22E)-3-oxochola-4,22-dien-24-oyl-CoA + H2O = (22R)-hydroxy-3-oxo-chol-4-ene-24-oyl-CoA. The protein operates within steroid metabolism; cholesterol degradation. Its function is as follows. Degradation of the cholesterol side chain involves 3 multistep beta-oxidation cycles, this may be involved in the second cycle. Hydrates 3-OCDO-CoA ((22E)-3-oxo-chol-4,22-dien-24-oyl-CoA) to make (22R)-HOCO-CoA (3-oxo-chol-4-ene-(22R)-hydroxy-24-oyl-CoA). Also acts on octenoyl-CoA. Not active on (E)-3-OCDS-CoA ((E)-3-oxocholest-4,24-dien-26-oyl-CoA) or 3-OPDC-CoA (3-oxo-4,17-pregnadiene-20-carboxyl-CoA). Hydrates the same substrate as ChsH3, but the 2 enzymes make different stereoisomers of the product. This Mycobacterium tuberculosis (strain ATCC 25618 / H37Rv) protein is Enoyl-CoA hydratase EchA19.